The following is a 403-amino-acid chain: Neuromedin U receptor homolog nmur-2 (403 aa).

Topologically, residues 1 to 27 (MSQCTVEYNVSEITEYVLSTLGERCQS) are extracellular. The chain crosses the membrane as a helical span at residues 28 to 48 (AGIVIPTVIIYGTIFLLGLFG). Topologically, residues 49–68 (NICTCIVIAANKSMHNPTNY) are cytoplasmic. Residues 69–89 (YLFSLAVSDIIALILGLPMEF) traverse the membrane as a helical segment. Residues 90-109 (YQSLDYSYPYRFSEGICKAR) are Extracellular-facing. A helical transmembrane segment spans residues 110–130 (AFLIEFTSYASIMIICCFSFE). Over 131 to 151 (RWLAICHPLRSKIFSTLWRAN) the chain is Cytoplasmic. The chain crosses the membrane as a helical span at residues 152–172 (VLIILAWTISFVCALPIAFIV). The Extracellular segment spans residues 173 to 216 (QINKLPLPEDAKYQPWTNKVSTDGIFVLHTEFCAMNQSRPDQQK). A helical transmembrane segment spans residues 217–237 (MIIIFAFTVFFVIPAIAIVIM). The Cytoplasmic segment spans residues 238–268 (YAHIAVQLESSEIDLKGDKMVKKRRNKSNRT). The helical transmembrane segment at 269 to 289 (VLKMLLSVVITFFICWLPFHI) threads the bilayer. Residues 290–304 (QRLLSVYTTWSETTT) lie on the Extracellular side of the membrane. The helical transmembrane segment at 305–325 (ISPPVQFLSMIVFYISGFCYY) threads the bilayer. The Cytoplasmic segment spans residues 326–403 (SNSAANPILY…PHRKLEVHNY (78 aa)).

The protein belongs to the G-protein coupled receptor 1 family.

Its subcellular location is the membrane. Its function is as follows. Putative G protein-coupled receptor for pyrokinin-like neuropeptide derived from the processing of the neuropeptide precursor capa-1. The sequence is that of Neuromedin U receptor homolog nmur-2 from Caenorhabditis elegans.